Consider the following 167-residue polypeptide: Urease accessory protein UreE (167 aa).

The disordered stretch occupies residues 137 to 158 (EAGAYQSAPHGHSHSHAHGHDH).

This sequence belongs to the UreE family.

It localises to the cytoplasm. Its function is as follows. Involved in urease metallocenter assembly. Binds nickel. Probably functions as a nickel donor during metallocenter assembly. The protein is Urease accessory protein UreE of Pseudomonas putida (strain ATCC 700007 / DSM 6899 / JCM 31910 / BCRC 17059 / LMG 24140 / F1).